A 964-amino-acid chain; its full sequence is Protein HIRA (964 aa).

6 WD repeats span residues 10-50 (RHEG…KDNT), 64-103 (DHFGSVNCVRWAKHGRYLASGSDDQVILIHERKAGSGTSE), 123-162 (GHTADVVDLSWSPDDSTLASGSLDNTIHIWNMNNGICTAV), 165-204 (GHTSLVKGVTWDPIGSFIASQSDDKTVMIWRTSDWSLAHK), 259-331 (GHNA…PLFV), and 335-376 (FFSQ…HRLS). The disordered stretch occupies residues 453–490 (SHEDSKKTAGPTADDVKKGNQLSSPVKQREYRRPDGRK). Positions 479–490 (KQREYRRPDGRK) are enriched in basic and acidic residues. Residues 644–685 (LWSDRISGKVTVLAGNANFWAVGCEDGFLQVYTRCGVRAMPA) form a WD 7 repeat. Residues 920–940 (ASNRKVQRLLNEFMDLLLEYE) are a coiled coil.

It belongs to the WD repeat HIR1 family. As to quaternary structure, interacts with RS2. In terms of tissue distribution, more abundant in apices and young leaf primordia than in fully expanded leaf tissues.

The protein resides in the nucleus. In terms of biological role, histone chaperone involved in maintining knox genes silencing throughout leaf development. The chain is Protein HIRA from Zea mays (Maize).